We begin with the raw amino-acid sequence, 190 residues long: Small ribosomal subunit protein eS7x (190 aa).

The residue at position 1 (Met-1) is an N-acetylmethionine. Residues Thr-17–Val-50 adopt a coiled-coil conformation.

It belongs to the eukaryotic ribosomal protein eS7 family.

The chain is Small ribosomal subunit protein eS7x (RPS7C) from Arabidopsis thaliana (Mouse-ear cress).